The sequence spans 582 residues: Myoneurin (582 aa).

Residues 24-89 enclose the BTB domain; sequence CDCTIVIGEF…IYTGTLNLDS (66 aa). Residues 169-197 form a disordered region; it reads QGALAKKSSQTKKKKKAFNSPKTGQNKTV. Short sequence motifs (nuclear localization signal) lie at residues 174–190 and 257–262; these read KKSSQTKKKKKAFNSPK and KRKRGK. Over residues 188 to 197 the composition is skewed to polar residues; that stretch reads SPKTGQNKTV. At Ser-289 the chain carries Phosphoserine. The C2H2-type 1; degenerate zinc-finger motif lies at 302–324; it reads PMCNTRGKVFSEASSLRRHMRIH. 6 consecutive C2H2-type zinc fingers follow at residues 330-352, 358-381, 387-409, 415-437, 443-465, and 471-494; these read YVCHLCGKAFTQCNQLKTHVRTH, YKCELCDKGFAQKCQLVFHSRMHH, YKCDVCNLQFATSSNLKIHARKH, YVCDRCGQRFAQASTLTYHVRRH, YVCDTCGKAFAVSSSLITHSRKH, and FICELCGNSYTDIKNLKKHKTKVH. The disordered stretch occupies residues 489–538; sequence HKTKVHSGADKTPDSSAEDHTLSEQDSIQKSPLSETMDVKPSDTTLPLAL. Residues 495 to 511 show a composition bias toward basic and acidic residues; it reads SGADKTPDSSAEDHTLS. The span at 512 to 522 shows a compositional bias: polar residues; the sequence is EQDSIQKSPLS.

This sequence belongs to the krueppel C2H2-type zinc-finger protein family.

It localises to the nucleus. The protein is Myoneurin (MYNN) of Pongo abelii (Sumatran orangutan).